The sequence spans 280 residues: UPF0273 protein SSO1861 (280 aa).

A KaiC domain is found at 2-246 (KRVKTYIPGL…YLKISNWSVS (245 aa)). ATP is bound at residue 29–36 (GGPGTGKS).

It belongs to the UPF0273 family.

The polypeptide is UPF0273 protein SSO1861 (Saccharolobus solfataricus (strain ATCC 35092 / DSM 1617 / JCM 11322 / P2) (Sulfolobus solfataricus)).